The sequence spans 1057 residues: Hemophilin receptor (1057 aa).

The 118-residue stretch at 168–285 folds into the TBDR plug domain; that stretch reads KVYDANRSSV…VGGAVVVKTL (118 aa). Residues 296–1057 form the TBDR beta-barrel domain; the sequence is SFGAELKVEG…TMKISWTTKF (762 aa).

It belongs to the TonB-dependent receptor family.

It localises to the cell outer membrane. Its function is as follows. Part of a high affinity heme acquisition system. Functions as a gateway for heme entry into the bacterial cell, enabling growth on hemoprotein sources. Can acquire heme directly from hemoprotein reservoirs, however, HphA likely enhances the efficiency of this process by delivering heme to HphR. Is essential for virulence, bacterial dissemination and growth in the blood. The protein is Hemophilin receptor of Acinetobacter baumannii.